The chain runs to 151 residues: Small heat shock protein HspH (151 aa).

Residues 28–138 form the sHSP domain; sequence RAGEDNYPPY…KPRRIAINAA (111 aa).

The protein belongs to the small heat shock protein (HSP20) family.

This Bradyrhizobium diazoefficiens (strain JCM 10833 / BCRC 13528 / IAM 13628 / NBRC 14792 / USDA 110) protein is Small heat shock protein HspH (hspH).